We begin with the raw amino-acid sequence, 516 residues long: Monocarboxylate transporter 12 (516 aa).

The Cytoplasmic segment spans residues 1–50; it reads MPSGSHWTANSSKIITWLLEQPGKEEKRKTMAKVNRARSTSPPDGGWGWM. Transmembrane regions (helical) follow at residues 51–73, 88–108, 116–136, 145–165, 178–198, 207–227, 283–303, 319–339, 350–370, 377–397, 410–430, and 440–460; these read IVAGCFLVTICTRAVTRCISIFF, AWIHSIVDCVTMLCAPLGSVV, VGIMLGGLLASTGLILSSFAT, LGVLTGLGFALCYSPAIAMVG, IAMSGSGIGTFILAPVVQLLI, LLILGGFVLNLCVCGALMRPI, FVVLAVSVLFMAYGCSPLFVY, AFLMSILGVIDIIGNITFGWL, YVCYLFAVGMDGLCYLCLPML, VPFSCTFGYFDGAYVTLIPVV, ALGVVYFLHAVPYLVSPPIAG, and TAAFLLCGFSMIFSSVLLGFA. Residues 461–516 lie on the Cytoplasmic side of the membrane; the sequence is RLIKRMRKTQLQFIAKESDPKLQLWTNGSVAYSVARELDQKHGEPVATAVPGYSLT.

The protein belongs to the major facilitator superfamily. Monocarboxylate porter (TC 2.A.1.13) family. As to quaternary structure, interacts with isoform 2 of BSG; this interaction is required for its localization to the plasma membrane. In terms of tissue distribution, most highly expressed in kidney, followed by retina, lung, heart and testis. Very weakly expressed in brain and liver. Also detected in lens.

The protein localises to the cell membrane. Its subcellular location is the basolateral cell membrane. It carries out the reaction creatine(in) = creatine(out). It catalyses the reaction guanidinoacetate(in) = guanidinoacetate(out). Creatine uptake is inhibited by carbonyl cyanide 3-chlorophenylhydrazone (CCCP) and by valinomycin. In terms of biological role, functions as a transporter for creatine and as well for its precursor guanidinoacetate. Transport of creatine and GAA is independent of resting membrane potential and extracellular Na(+), Cl(-), or pH. Contributes to the process of creatine biosynthesis and distribution. The chain is Monocarboxylate transporter 12 from Homo sapiens (Human).